A 347-amino-acid polypeptide reads, in one-letter code: S-adenosylmethionine:tRNA ribosyltransferase-isomerase (347 aa).

It belongs to the QueA family. Monomer.

It localises to the cytoplasm. It carries out the reaction 7-aminomethyl-7-carbaguanosine(34) in tRNA + S-adenosyl-L-methionine = epoxyqueuosine(34) in tRNA + adenine + L-methionine + 2 H(+). Its pathway is tRNA modification; tRNA-queuosine biosynthesis. Functionally, transfers and isomerizes the ribose moiety from AdoMet to the 7-aminomethyl group of 7-deazaguanine (preQ1-tRNA) to give epoxyqueuosine (oQ-tRNA). This Methylococcus capsulatus (strain ATCC 33009 / NCIMB 11132 / Bath) protein is S-adenosylmethionine:tRNA ribosyltransferase-isomerase.